A 153-amino-acid chain; its full sequence is Superoxide dismutase [Cu-Zn] (153 aa).

Asparagine 24 carries an N-linked (GlcNAc...) asparagine glycan. Histidine 47, histidine 49, and histidine 64 together coordinate Cu cation. A disulfide bridge links cysteine 58 with cysteine 147. Residues histidine 64, histidine 72, histidine 81, and aspartate 84 each contribute to the Zn(2+) site. Histidine 121 serves as a coordination point for Cu cation. Residues 126-137 show a composition bias toward basic and acidic residues; that stretch reads DLGRGGNEESKK. Positions 126–145 are disordered; it reads DLGRGGNEESKKTGNAGPRP. A substrate-binding site is contributed by arginine 144.

The protein belongs to the Cu-Zn superoxide dismutase family. As to quaternary structure, homodimer. The cofactor is Cu cation. Requires Zn(2+) as cofactor.

It localises to the cytoplasm. The catalysed reaction is 2 superoxide + 2 H(+) = H2O2 + O2. Its function is as follows. Destroys radicals which are normally produced within the cells and which are toxic to biological systems. This chain is Superoxide dismutase [Cu-Zn], found in Humicola lutea.